The primary structure comprises 196 residues: Histone H1.0-B (196 aa).

Disordered stretches follow at residues 1-29 and 86-196; these read MAEN…PKYS and GVGA…GRKK. Positions 24–97 constitute an H15 domain; it reads DHPKYSDMIL…GASGSFRLAK (74 aa). A compositionally biased stretch (basic residues) spans 104-196; that stretch reads PAKKPKKEIK…ASPKKSGRKK (93 aa).

It belongs to the histone H1/H5 family.

The protein localises to the nucleus. It is found in the chromosome. In terms of biological role, histones H1 are necessary for the condensation of nucleosome chains into higher-order structures. The histones H1.0 are found in cells that are in terminal stages of differentiation or that have low rates of cell division. The chain is Histone H1.0-B (h1-0-b) from Xenopus laevis (African clawed frog).